The primary structure comprises 252 residues: 4-hydroxy-tetrahydrodipicolinate reductase (252 aa).

Residues 8–13, 84–86, and 108–111 contribute to the NAD(+) site; these read GCCGKM, CST, and SANM. Residue H141 is the Proton donor/acceptor of the active site. H142 is a (S)-2,3,4,5-tetrahydrodipicolinate binding site. The active-site Proton donor is K145. 151–152 contacts (S)-2,3,4,5-tetrahydrodipicolinate; the sequence is GT.

The protein belongs to the DapB family.

Its subcellular location is the cytoplasm. The catalysed reaction is (S)-2,3,4,5-tetrahydrodipicolinate + NAD(+) + H2O = (2S,4S)-4-hydroxy-2,3,4,5-tetrahydrodipicolinate + NADH + H(+). The enzyme catalyses (S)-2,3,4,5-tetrahydrodipicolinate + NADP(+) + H2O = (2S,4S)-4-hydroxy-2,3,4,5-tetrahydrodipicolinate + NADPH + H(+). Its pathway is amino-acid biosynthesis; L-lysine biosynthesis via DAP pathway; (S)-tetrahydrodipicolinate from L-aspartate: step 4/4. Catalyzes the conversion of 4-hydroxy-tetrahydrodipicolinate (HTPA) to tetrahydrodipicolinate. In Clostridium botulinum (strain Eklund 17B / Type B), this protein is 4-hydroxy-tetrahydrodipicolinate reductase.